Consider the following 91-residue polypeptide: Probable insulin-like peptide gamma-type 1 (91 aa).

A signal peptide spans M1–G26. Disulfide bonds link C37/C66, C49/C79, and C65/C70.

The protein belongs to the insulin family.

Its subcellular location is the secreted. This chain is Probable insulin-like peptide gamma-type 1 (ins-11), found in Caenorhabditis elegans.